The following is a 232-amino-acid chain: Flagellar L-ring protein (232 aa).

The N-terminal stretch at 1–21 (MQKYALHAYPVMALMVATLTG) is a signal peptide. Cys-22 is lipidated: N-palmitoyl cysteine. Cys-22 is lipidated: S-diacylglycerol cysteine.

The protein belongs to the FlgH family. As to quaternary structure, the basal body constitutes a major portion of the flagellar organelle and consists of four rings (L,P,S, and M) mounted on a central rod.

The protein resides in the cell outer membrane. Its subcellular location is the bacterial flagellum basal body. Functionally, assembles around the rod to form the L-ring and probably protects the motor/basal body from shearing forces during rotation. This Salmonella gallinarum (strain 287/91 / NCTC 13346) protein is Flagellar L-ring protein.